A 344-amino-acid chain; its full sequence is Holliday junction branch migration complex subunit RuvB (344 aa).

Positions 1 to 180 are large ATPase domain (RuvB-L); sequence MSRIVSGEAQ…FGIPVRLEFY (180 aa). Residues leucine 19, arginine 20, glycine 61, lysine 64, threonine 65, threonine 66, arginine 170, tyrosine 180, and arginine 217 each contribute to the ATP site. Threonine 65 serves as a coordination point for Mg(2+). A small ATPAse domain (RuvB-S) region spans residues 181–251; that stretch reads THDELARVLL…AAAAALARLD (71 aa). The head domain (RuvB-H) stretch occupies residues 254-344; that stretch reads EVGLDALDRR…AAPPADLFDK (91 aa). The DNA site is built by arginine 290, arginine 309, and arginine 314.

This sequence belongs to the RuvB family. Homohexamer. Forms an RuvA(8)-RuvB(12)-Holliday junction (HJ) complex. HJ DNA is sandwiched between 2 RuvA tetramers; dsDNA enters through RuvA and exits via RuvB. An RuvB hexamer assembles on each DNA strand where it exits the tetramer. Each RuvB hexamer is contacted by two RuvA subunits (via domain III) on 2 adjacent RuvB subunits; this complex drives branch migration. In the full resolvosome a probable DNA-RuvA(4)-RuvB(12)-RuvC(2) complex forms which resolves the HJ.

The protein resides in the cytoplasm. The catalysed reaction is ATP + H2O = ADP + phosphate + H(+). Its function is as follows. The RuvA-RuvB-RuvC complex processes Holliday junction (HJ) DNA during genetic recombination and DNA repair, while the RuvA-RuvB complex plays an important role in the rescue of blocked DNA replication forks via replication fork reversal (RFR). RuvA specifically binds to HJ cruciform DNA, conferring on it an open structure. The RuvB hexamer acts as an ATP-dependent pump, pulling dsDNA into and through the RuvAB complex. RuvB forms 2 homohexamers on either side of HJ DNA bound by 1 or 2 RuvA tetramers; 4 subunits per hexamer contact DNA at a time. Coordinated motions by a converter formed by DNA-disengaged RuvB subunits stimulates ATP hydrolysis and nucleotide exchange. Immobilization of the converter enables RuvB to convert the ATP-contained energy into a lever motion, pulling 2 nucleotides of DNA out of the RuvA tetramer per ATP hydrolyzed, thus driving DNA branch migration. The RuvB motors rotate together with the DNA substrate, which together with the progressing nucleotide cycle form the mechanistic basis for DNA recombination by continuous HJ branch migration. Branch migration allows RuvC to scan DNA until it finds its consensus sequence, where it cleaves and resolves cruciform DNA. This Phenylobacterium zucineum (strain HLK1) protein is Holliday junction branch migration complex subunit RuvB.